Here is a 207-residue protein sequence, read N- to C-terminus: High frequency lysogenization protein HflD homolog (207 aa).

Belongs to the HflD family.

Its subcellular location is the cytoplasm. The protein resides in the cell inner membrane. The sequence is that of High frequency lysogenization protein HflD homolog from Azotobacter vinelandii (strain DJ / ATCC BAA-1303).